An 83-amino-acid polypeptide reads, in one-letter code: Alpha-conotoxin QcIA (83 aa).

The signal sequence occupies residues 1 to 21; sequence MGMRMMFTLFLLAVLSTTVVS. The propeptide occupies 22–48; sequence FTLDRASNGRDAAADSKAADQIAQTVR. Intrachain disulfides connect cysteine 51–cysteine 57 and cysteine 52–cysteine 65. Positions 53–55 are ser-Xaa-Pro motif, crucial for potent interaction with nAChR; it reads SNP. A propeptide spanning residues 66-83 is cleaved from the precursor; it reads RRTLMLQNPLNHDMSPSA.

This sequence belongs to the conotoxin A superfamily. As to expression, expressed by the venom duct.

It is found in the secreted. In terms of biological role, alpha-conotoxins bind to the nicotinic acetylcholine receptors (nAChR) and inhibit them. A synthetic amidated version of this toxin potently and preferentially antagonizes neuronal rat alpha-3-beta-2 (IC(50)=55.7 nM) and alpha-6/alpha-3-beta-4 (IC(50)=90.69 nM) nAChRs. This Conus quercinus (Oak cone) protein is Alpha-conotoxin QcIA.